Reading from the N-terminus, the 1132-residue chain is Phycobiliprotein ApcE (1132 aa).

C196 contributes to the (2R,3E)-phycocyanobilin binding site. PBS-linker domains follow at residues 253–433, 514–692, 709–887, and 940–1121; these read DQQG…FRKV, LGPK…EKQE, PDID…KQNN, and GRGQ…SSLS.

Belongs to the phycobilisome linker protein family. As to quaternary structure, heterodimer of ApcF (a variant beta-allophycocyanin). Phycobilisomes of this organism are composed of a two cylinder core, from which six rods radiate. The core is mainly composed of allophycocyanin alpha and beta chains and of minor components. In terms of processing, contains one covalently linked bilin chromophore. This protein autochromophorylates.

The protein localises to the cellular thylakoid membrane. This protein is postulated to act both as terminal energy acceptor (by its phycobilin-like domains) and as a linker polypeptide (by its repeats and arms) that stabilizes the phycobilisome core architecture. Has intrinsic bilin lyase activity. The polypeptide is Phycobiliprotein ApcE (apcE) (Nostoc sp. (strain PCC 7120 / SAG 25.82 / UTEX 2576)).